We begin with the raw amino-acid sequence, 60 residues long: Potassium channel toxin alpha-KTx 12.7 (60 aa).

An N-terminal signal peptide occupies residues 1–22; the sequence is MSNMPVLIITLLLFSMYISTAA. Cystine bridges form between cysteine 30–cysteine 51, cysteine 36–cysteine 56, and cysteine 40–cysteine 58.

This sequence belongs to the short scorpion toxin superfamily. Potassium channel inhibitor family. Alpha-KTx 12 subfamily. Expressed by the venom gland.

The protein localises to the secreted. Functionally, inhibits voltage-gated potassium channels. The polypeptide is Potassium channel toxin alpha-KTx 12.7 (Lychas mucronatus (Chinese swimming scorpion)).